Reading from the N-terminus, the 352-residue chain is Protein AMBP (352 aa).

A signal peptide spans 1 to 19; sequence MRSLSGLLLLLTACLAVNA. 3-hydroxy-L-kynurenine-binding residues include Cys53 and Lys111. Cys91 and Cys188 are disulfide-bonded. Asn115 carries N-linked (GlcNAc...) asparagine glycosylation. The 3-hydroxy-L-kynurenine site is built by Lys137 and Lys149. Residue Ser215 is glycosylated (O-linked (Xyl...) (chondroitin sulfate) serine). Residues Asn223 and Asn250 are each glycosylated (N-linked (GlcNAc...) asparagine). Cystine bridges form between Cys231-Cys281, Cys240-Cys264, Cys256-Cys277, Cys287-Cys337, Cys296-Cys320, and Cys312-Cys333. BPTI/Kunitz inhibitor domains are found at residues 231–281 and 287–337; these read CQLD…LQTC and CNLP…KEYC.

In the N-terminal section; belongs to the calycin superfamily. Lipocalin family. As to quaternary structure, monomer. Homodimer. In plasma, it occurs as a monomer or dimer and in covalently-linked complexes with immunoglobulin A (IgA), ALB/albumin and F2/prothrombin. Chromophore-bound alpha-1-microglobulin interacts with the constant region of immunoglobulin A. Chromophore-bound alpha-1-microglobulin interacts with ALB with molar ratio 2:1 and 1:1; this interaction does not prevent fatty acid binding to ALB. Interacts with F2/prothrombin (via N-terminus) with molar ratio 2:1 and 1:1; this interaction does not prevent the activation of prothrombin to thrombin. Interacts with NDUFAB1, a subunit of mitochondrial complex I. Interacts with FN1. In terms of assembly, I-alpha-I plasma protease inhibitors are assembled from one or two heavy chains (HC) and one light chain, bikunin. Inter-alpha-inhibitor (I-alpha-I) is composed of ITIH1/HC1, ITIH2/HC2 and bikunin, and pre-alpha-inhibitor (P-alpha-I) of ITIH3/HC3 and bikunin. Interacts with TNFAIP6 (via Link domain). Monomer. Also occurs as a complex with tryptase in mast cells. In terms of processing, the precursor is proteolytically processed into separately functioning proteins. Post-translationally, 3-hydroxykynurenine, an oxidized tryptophan metabolite that is common in biological fluids, reacts with Cys-53, Lys-111, Lys-137, and Lys-149 to form heterogeneous polycyclic chromophores including hydroxanthommatin. The reaction by alpha-1-microglobulin is autocatalytic; the human protein forms chromophore even when expressed in insect and bacterial cells. The chromophore can react with accessible cysteines forming non-reducible thioether cross-links with other molecules of alpha-1-microglobulin or with other proteins such as Ig alpha-1 chain C region 'Cys-352'. Heavy chains are interlinked with bikunin via a chondroitin 4-sulfate bridge to the C-terminal aspartate. In terms of processing, proteolytically cleaved by PRSS3 at Kunitz domain 2. In terms of tissue distribution, expressed by the liver and secreted in plasma.

The protein resides in the secreted. It localises to the endoplasmic reticulum. It is found in the cytoplasm. Its subcellular location is the cytosol. The protein localises to the cell membrane. The protein resides in the nucleus membrane. It localises to the mitochondrion inner membrane. It is found in the extracellular space. Its subcellular location is the extracellular matrix. Functionally, antioxidant and tissue repair protein with reductase, heme-binding and radical-scavenging activities. Removes and protects against harmful oxidants and repairs macromolecules in intravascular and extravascular spaces and in intracellular compartments. Intravascularly, plays a regulatory role in red cell homeostasis by preventing heme- and reactive oxygen species-induced cell damage. Binds and degrades free heme to protect fetal and adult red blood cells from hemolysis. Reduces extracellular methemoglobin, a Fe3+ (ferric) form of hemoglobin that cannot bind oxygen, back to the Fe2+ (ferrous) form deoxyhemoglobin, which has oxygen-carrying potential. Upon acute inflammation, inhibits oxidation of low-density lipoprotein particles by MPO and limits vascular damage. Extravascularly, protects from oxidation products formed on extracellular matrix structures and cell membranes. Catalyzes the reduction of carbonyl groups on oxidized collagen fibers and preserves cellular and extracellular matrix ultrastructures. Importantly, counteracts the oxidative damage at blood-placenta interface, preventing leakage of free fetal hemoglobin into the maternal circulation. Intracellularly, has a role in maintaining mitochondrial redox homeostasis. Bound to complex I of the respiratory chain of mitochondria, may scavenge free radicals and preserve mitochondrial ATP synthesis. Protects renal tubule epithelial cells from heme-induced oxidative damage to mitochondria. Reduces cytochrome c from Fe3+ (ferric) to the Fe2+ (ferrous) state through formation of superoxide anion radicals in the presence of ascorbate or NADH/NADPH electron donor cofactors, ascorbate being the preferred cofactor. Has a chaperone role in facilitating the correct folding of bikunin in the endoplasmic reticulum compartment. Its function is as follows. Kunitz-type serine protease inhibitor and structural component of extracellular matrix with a role in extracellular space remodeling and cell adhesion. Among others, has antiprotease activity toward kallikrein, a protease involved in airway inflammation; inhibits GZMK/granzyme, a granule-stored serine protease involved in NK and T cell cytotoxic responses; and inhibits PLG/plasmin, a protease required for activation of matrix metalloproteinases. As part of I-alpha-I complex, provides for the heavy chains to be transferred from I-alpha-I complex to hyaluronan in the presence of TNFAIP6, in a dynamic process that releases free bikunin and remodels extracellular matrix proteoglycan structures. Free bikunin, but not its heavy chain-bound form, acts as a potent protease inhibitor in airway secretions. Part of hyaluronan-rich extracellular matrix that surrounds oocyte during cumulus oophorus expansion, an indispensable process for proper ovulation. Also inhibits calcium oxalate crystallization. Kunitz-type serine protease inhibitor. Has high catalytic efficiency for F10/blood coagulation factor Xa and may act as an anticoagulant by inhibiting prothrombin activation. Inhibits trypsin and mast cell CMA1/chymase and tryptase proteases. The protein is Protein AMBP (AMBP) of Bos taurus (Bovine).